Here is a 437-residue protein sequence, read N- to C-terminus: UDP-N-acetylmuramate--L-alanine ligase (437 aa).

Position 108–114 (108–114) interacts with ATP; sequence GAHGKTS.

Belongs to the MurCDEF family.

It is found in the cytoplasm. The catalysed reaction is UDP-N-acetyl-alpha-D-muramate + L-alanine + ATP = UDP-N-acetyl-alpha-D-muramoyl-L-alanine + ADP + phosphate + H(+). The protein operates within cell wall biogenesis; peptidoglycan biosynthesis. In terms of biological role, cell wall formation. The polypeptide is UDP-N-acetylmuramate--L-alanine ligase (Staphylococcus aureus (strain COL)).